The following is a 274-amino-acid chain: 5'-nucleotidase SurE (274 aa).

Asp-12, Asp-13, Ser-45, and Asn-103 together coordinate a divalent metal cation.

It belongs to the SurE nucleotidase family. A divalent metal cation is required as a cofactor.

The protein resides in the cytoplasm. It carries out the reaction a ribonucleoside 5'-phosphate + H2O = a ribonucleoside + phosphate. In terms of biological role, nucleotidase that shows phosphatase activity on nucleoside 5'-monophosphates. The sequence is that of 5'-nucleotidase SurE from Chlamydia felis (strain Fe/C-56) (Chlamydophila felis).